Here is a 218-residue protein sequence, read N- to C-terminus: DNA ADP-ribosyl transferase (218 aa).

One can recognise a DarT domain in the interval 14 to 217 (ALIWRIVHRD…SVHTRSGWYF (204 aa)). Residues 18 to 20 (RIV) and Arg57 each bind NAD(+). The segment at 41–59 (QAENWINIGNPELIGKRAG) is NAD(+)-binding element. Catalysis depends on Arg57, which acts as the Proton acceptor. Positions 123–170 (TDSHAYYNWTNYYTSLNSLDQIDWPILQARDFRRDPDDPAKFERYQAE) are ADP-ribosylating turn-turn loop. Glu170 is a catalytic residue.

It belongs to the DarT ADP-ribosyltransferase family. As to quaternary structure, interacts with cognate antitoxin DarG (via C-terminus); this heterodimeric complex neutralizes the toxic effect of DarT by preventing ssDNA binding to DarT and consequently inactivating the toxin by direct protein-protein interactions.

It catalyses the reaction a thymidine in DNA + NAD(+) = an N-(ADP-alpha-D-ribosyl)-thymidine in DNA + nicotinamide + H(+). Its function is as follows. Toxic component of the hybrid type II/IV toxin-antitoxin (TA) system DarTG, which plays a crucial role in controlling bacterial growth and bacteriophage infection. ADP-ribosylates ssDNA in the sequence TTT/TCT. In case of phage infection, DarT toxin ADP-ribosylates DNA, which inhibits both viral DNA and RNA synthesis and leads to abortive infection. Its toxic effect is neutralized by cognate antitoxin DarG. May target ssDNA loops during DNA replication, probably modifies thymidine. Wild-type protein cannot be expressed at low levels in the absence of its cognate antitoxin, but a mutant protein (G49D) can be expressed, which slows growth, rapidly inhibits DNA replication, and induces RecA expression and the SOS response. The slow growth phenotype can be suppressed by cognate antitoxin DarG. Has no activity on dsDNA in vitro. In vivo ADP-ribosylates genomic DNA (gDNA). Genetic data strongly suggests ADP-ribosylation by DarT probably generates ssDNA gaps that are repaired by the RecFOR-mediated homologous recombination pathway (RuvAB, RecG) and resolved by RuvC. In some cases these gaps probably migrate into dsDNA, where they are resolved by nucleotide excision repair (NER) detected by UvrAB, excised by UvrC, removed by UvrD, and repaired by Pol I and ligase. Other pathways may also be involved in ADP-ribosylation removal from DNA. The protein is DNA ADP-ribosyl transferase of Escherichia coli O127:H6 (strain E2348/69 / EPEC).